Here is a 456-residue protein sequence, read N- to C-terminus: Protein odr-4 homolog (456 aa).

The span at Ile-374–Leu-401 shows a compositional bias: low complexity. The segment at Ile-374–Asn-403 is disordered. Residues Tyr-436–Val-456 form a helical membrane-spanning segment.

Belongs to the ODR-4 family.

The protein resides in the membrane. May play a role in the trafficking of a subset of G-protein coupled receptors. The protein is Protein odr-4 homolog of Dictyostelium discoideum (Social amoeba).